The sequence spans 186 residues: Threonylcarbamoyl-AMP synthase (186 aa).

One can recognise a YrdC-like domain in the interval 5 to 186 (TQSINDAVKC…DAITGEILRL (182 aa)).

It belongs to the SUA5 family. TsaC subfamily.

Its subcellular location is the cytoplasm. The catalysed reaction is L-threonine + hydrogencarbonate + ATP = L-threonylcarbamoyladenylate + diphosphate + H2O. Functionally, required for the formation of a threonylcarbamoyl group on adenosine at position 37 (t(6)A37) in tRNAs that read codons beginning with adenine. Catalyzes the conversion of L-threonine, HCO(3)(-)/CO(2) and ATP to give threonylcarbamoyl-AMP (TC-AMP) as the acyladenylate intermediate, with the release of diphosphate. The chain is Threonylcarbamoyl-AMP synthase from Coxiella burnetii (strain RSA 331 / Henzerling II).